Consider the following 190-residue polypeptide: Probable gluconokinase (190 aa).

ATP is bound at residue 7 to 14 (GVSGSGKT).

This sequence belongs to the gluconokinase GntK/GntV family.

The catalysed reaction is D-gluconate + ATP = 6-phospho-D-gluconate + ADP + H(+). Its pathway is carbohydrate acid metabolism; D-gluconate degradation. The protein is Probable gluconokinase (idnk) of Xenopus tropicalis (Western clawed frog).